Here is a 526-residue protein sequence, read N- to C-terminus: Maturase K (526 aa).

The protein belongs to the intron maturase 2 family. MatK subfamily.

It localises to the plastid. It is found in the chloroplast. In terms of biological role, usually encoded in the trnK tRNA gene intron. Probably assists in splicing its own and other chloroplast group II introns. This Iris setosa (Hiougi-ayame) protein is Maturase K.